The following is a 525-amino-acid chain: ADP-ribosylation factor GTPase-activating protein 3 (525 aa).

Positions 10 to 126 (LAIFKRLRSV…IKTLATQATR (117 aa)) constitute an Arf-GAP domain. A C4-type zinc finger spans residues 25 to 48 (CFDCGAKNPSWASISYGVFLCIDC). The segment at 160–233 (VSGATQASAQ…KGLGAKKGSL (74 aa)) is disordered. Residues 162–177 (GATQASAQPEPASSTP) are compositionally biased toward polar residues. Over residues 222–233 (AKKGLGAKKGSL) the composition is skewed to low complexity. 4 positions are modified to phosphoserine: S232, S242, S271, and S275. Positions 249–271 (QAQAVDKRKEQEDLARGTPKEES) are disordered. The span at 293–305 (LNLSGQKKAEAER) shows a compositional bias: basic and acidic residues. 2 disordered regions span residues 293 to 364 (LNLS…SSSR) and 377 to 428 (FSSW…EAQK). Residues 319 to 333 (HSVTSDMQTIEQESP) are compositionally biased toward polar residues. S332 carries the post-translational modification Phosphoserine. Over residues 349–363 (SYFSSSSKWSEQSSS) the composition is skewed to low complexity. At S379 the chain carries Phosphoserine. Over residues 387–398 (YWKKDSSRDPEP) the composition is skewed to basic and acidic residues. Phosphoserine is present on residues S437, S460, S462, S464, S466, and S467.

It localises to the cytoplasm. The protein localises to the golgi apparatus membrane. Its activity is regulated as follows. GAP activity stimulated by phosphatidylinositol 4,5-bisphosphate (PIP2). Its function is as follows. GTPase-activating protein (GAP) for ADP ribosylation factor 1 (ARF1). Hydrolysis of ARF1-bound GTP may lead to dissociation of coatomer from Golgi-derived membranes to allow fusion with target membranes. The sequence is that of ADP-ribosylation factor GTPase-activating protein 3 from Rattus norvegicus (Rat).